The following is a 131-amino-acid chain: Large ribosomal subunit protein bL17 (131 aa).

The protein belongs to the bacterial ribosomal protein bL17 family. In terms of assembly, part of the 50S ribosomal subunit. Contacts protein L32.

The chain is Large ribosomal subunit protein bL17 from Burkholderia multivorans (strain ATCC 17616 / 249).